A 138-amino-acid polypeptide reads, in one-letter code: Translation initiation factor 5A (138 aa).

Residue Lys37 is modified to Hypusine.

The protein belongs to the eIF-5A family.

It localises to the cytoplasm. Functionally, functions by promoting the formation of the first peptide bond. This Pyrococcus furiosus (strain ATCC 43587 / DSM 3638 / JCM 8422 / Vc1) protein is Translation initiation factor 5A.